The chain runs to 475 residues: SAM50-like protein SPAC17C9.06 (475 aa).

A POTRA domain is found at valine 44–lysine 130.

The protein belongs to the SAM50/omp85 family. Associates with the mitochondrial contact site and cristae organizing system (MICOS) complex (also known as MINOS or MitOS complex).

It localises to the mitochondrion outer membrane. Functionally, may be required for the assembly pathway of mitochondrial outer membrane proteins. In Schizosaccharomyces pombe (strain 972 / ATCC 24843) (Fission yeast), this protein is SAM50-like protein SPAC17C9.06.